A 264-amino-acid polypeptide reads, in one-letter code: Thiamine pyrophosphokinase 1 (264 aa).

The segment covering 1-12 (MPLPTMTHSSSF) has biased composition (polar residues). Residues 1 to 27 (MPLPTMTHSSSFLRLPATSSPHPPPAD) are disordered.

The protein belongs to the thiamine pyrophosphokinase family.

The protein resides in the cytoplasm. Its subcellular location is the cytosol. The enzyme catalyses thiamine + ATP = thiamine diphosphate + AMP + H(+). The protein operates within cofactor biosynthesis; thiamine diphosphate biosynthesis; thiamine diphosphate from thiamine: step 1/1. Its function is as follows. Catalyzes the phosphorylation of thiamine to thiamine pyrophosphate (TPP). TPP is an active cofactor for enzymes involved in glycolysis and energy production. Plant leaves require high levels of TPP for photosynthesis and carbohydrate metabolism. The sequence is that of Thiamine pyrophosphokinase 1 (TPK1) from Oryza sativa subsp. japonica (Rice).